A 125-amino-acid chain; its full sequence is Basic leucine zipper transcriptional factor ATF-like (125 aa).

A compositionally biased stretch (low complexity) spans 1-14; the sequence is MPHSSDSSDSSFSR. Positions 1 to 59 are disordered; that stretch reads MPHSSDSSDSSFSRSPPPGKQDSSDDVRKVQRREKNRIAAQKSRQRQTQKADTLHLESE. In terms of domain architecture, bZIP spans 26 to 89; that stretch reads DVRKVQRREK…KYFTSVLSSH (64 aa). Residues 28–50 form a basic motif region; it reads RKVQRREKNRIAAQKSRQRQTQK. Residue S43 is modified to Phosphoserine. A Phosphothreonine modification is found at T48. A leucine-zipper region spans residues 54–75; that stretch reads LHLESEDLEKQNAALRKEIKQL.

Belongs to the bZIP family. As to quaternary structure, heterodimer; mainly heterodimerizes with JUNB. The BATF-JUNB heterodimer interacts with IRF4 and IRF8. Interacts (via bZIP domain) with IRF4 and IRF8; the interaction is direct. Also forms heterodimers with JUN and JUND. Interacts with IFI35. Post-translationally, phosphorylated on serine and threonine residues and at least one tyrosine residue. Phosphorylation at Ser-43 inhibit DNA binding activity and transforms it as a negative regulator of AP-1 mediated transcription. In terms of tissue distribution, detected in postnatal and adult lymphoid tissues such as thymus, spleen and lymph nodes. In thymus most concentrated expression is found in the immediate cortical layer. Differentially expressed during T-cell development in thymus. Highly expressed in Th17, Th1 and Th2 cells and in activated B-cells.

Its subcellular location is the nucleus. It is found in the cytoplasm. Its function is as follows. AP-1 family transcription factor that controls the differentiation of lineage-specific cells in the immune system: specifically mediates the differentiation of T-helper 17 cells (Th17), follicular T-helper cells (TfH), CD8(+) dendritic cells and class-switch recombination (CSR) in B-cells. Acts via the formation of a heterodimer with JUNB that recognizes and binds DNA sequence 5'-TGA[CG]TCA-3'. The BATF-JUNB heterodimer also forms a complex with IRF4 (or IRF8) in immune cells, leading to recognition of AICE sequence (5'-TGAnTCA/GAAA-3'), an immune-specific regulatory element, followed by cooperative binding of BATF and IRF4 (or IRF8) and activation of genes. Controls differentiation of T-helper cells producing interleukin-17 (Th17 cells) by binding to Th17-associated gene promoters: regulates expression of the transcription factor RORC itself and RORC target genes such as IL17 (IL17A or IL17B). Also involved in differentiation of follicular T-helper cells (TfH) by directing expression of BCL6 and MAF. In B-cells, involved in class-switch recombination (CSR) by controlling the expression of both AICDA and of germline transcripts of the intervening heavy-chain region and constant heavy-chain region (I(H)-C(H)). Following infection, can participate in CD8(+) dendritic cell differentiation via interaction with IRF4 and IRF8 to mediate cooperative gene activation. Regulates effector CD8(+) T-cell differentiation by regulating expression of SIRT1. Following DNA damage, part of a differentiation checkpoint that limits self-renewal of hematopoietic stem cells (HSCs): up-regulated by STAT3, leading to differentiation of HSCs, thereby restricting self-renewal of HSCs. The chain is Basic leucine zipper transcriptional factor ATF-like (Batf) from Mus musculus (Mouse).